The chain runs to 474 residues: Sugar transporter ERD6-like 17 (474 aa).

The next 12 membrane-spanning stretches (helical) occupy residues 27-47, 76-96, 106-126, 129-149, 159-180, 184-204, 266-286, 302-322, 329-349, 363-383, 403-423, and 429-449; these read ITAC…SFGV, FATL…MVIG, FLCI…LLNF, IISG…IAEI, TFSN…GNFI, TLAL…FFVP, TLVV…AAVI, IGTT…LILV, PLLM…GVAF, ILSF…LGGL, IVTL…NFLF, and GTFF…WLLV.

Belongs to the major facilitator superfamily. Sugar transporter (TC 2.A.1.1) family. Expressed in young seedlings.

The protein resides in the membrane. Sugar transporter. This Arabidopsis thaliana (Mouse-ear cress) protein is Sugar transporter ERD6-like 17.